The chain runs to 403 residues: Queuine tRNA-ribosyltransferase catalytic subunit 1 (403 aa).

The residue at position 2 (A2) is an N-acetylalanine. Residue D105 is the Proton acceptor of the active site. Queuine is bound at residue 105-109 (DSGGF). S139 carries the phosphoserine modification. Residues D159, Q202, and G229 each coordinate queuine. The RNA binding stretch occupies residues 260–266 (GVGYATD). The active-site Nucleophile is the D279. Positions 284–288 (TRTAR) are RNA binding; important for wobble base 34 recognition. 4 residues coordinate Zn(2+): C317, C319, C322, and H348.

It belongs to the queuine tRNA-ribosyltransferase family. Heterodimer of a catalytic subunit QTRT1 and an accessory subunit QTRT2. Zn(2+) is required as a cofactor. In terms of tissue distribution, expressed in brain, heart, kidney, liver, ling, skeletal muscle, spleen and testis.

It localises to the cytoplasm. The protein localises to the mitochondrion outer membrane. Its subcellular location is the nucleus. It carries out the reaction guanosine(34) in tRNA + queuine = queuosine(34) in tRNA + guanine. Catalytic subunit of the queuine tRNA-ribosyltransferase (TGT) that catalyzes the base-exchange of a guanine (G) residue with queuine (Q) at position 34 (anticodon wobble position) in tRNAs with GU(N) anticodons (tRNA-Asp, -Asn, -His and -Tyr), resulting in the hypermodified nucleoside queuosine (7-(((4,5-cis-dihydroxy-2-cyclopenten-1-yl)amino)methyl)-7-deazaguanosine). Catalysis occurs through a double-displacement mechanism. The nucleophile active site attacks the C1' of nucleotide 34 to detach the guanine base from the RNA, forming a covalent enzyme-RNA intermediate. The proton acceptor active site deprotonates the incoming queuine, allowing a nucleophilic attack on the C1' of the ribose to form the product. Modification of cytoplasmic tRNAs with queuosine controls the elongation speed of cognate codons, thereby ensuring the correct folding of nascent proteins to maintain proteome integrity. This Mus musculus (Mouse) protein is Queuine tRNA-ribosyltransferase catalytic subunit 1.